A 562-amino-acid chain; its full sequence is Dihydroxy-acid dehydratase (562 aa).

Cys55 contacts [2Fe-2S] cluster. Asp87 serves as a coordination point for Mg(2+). Cys128 serves as a coordination point for [2Fe-2S] cluster. Mg(2+)-binding residues include Asp129 and Lys130. Lys130 is modified (N6-carboxylysine). Cys200 lines the [2Fe-2S] cluster pocket. Glu451 is a binding site for Mg(2+). The active-site Proton acceptor is Ser477.

This sequence belongs to the IlvD/Edd family. As to quaternary structure, homodimer. Requires [2Fe-2S] cluster as cofactor. Mg(2+) is required as a cofactor.

It catalyses the reaction (2R)-2,3-dihydroxy-3-methylbutanoate = 3-methyl-2-oxobutanoate + H2O. It carries out the reaction (2R,3R)-2,3-dihydroxy-3-methylpentanoate = (S)-3-methyl-2-oxopentanoate + H2O. It functions in the pathway amino-acid biosynthesis; L-isoleucine biosynthesis; L-isoleucine from 2-oxobutanoate: step 3/4. Its pathway is amino-acid biosynthesis; L-valine biosynthesis; L-valine from pyruvate: step 3/4. Its function is as follows. Functions in the biosynthesis of branched-chain amino acids. Catalyzes the dehydration of (2R,3R)-2,3-dihydroxy-3-methylpentanoate (2,3-dihydroxy-3-methylvalerate) into 2-oxo-3-methylpentanoate (2-oxo-3-methylvalerate) and of (2R)-2,3-dihydroxy-3-methylbutanoate (2,3-dihydroxyisovalerate) into 2-oxo-3-methylbutanoate (2-oxoisovalerate), the penultimate precursor to L-isoleucine and L-valine, respectively. The polypeptide is Dihydroxy-acid dehydratase (Cytophaga hutchinsonii (strain ATCC 33406 / DSM 1761 / CIP 103989 / NBRC 15051 / NCIMB 9469 / D465)).